A 444-amino-acid polypeptide reads, in one-letter code: Methylenetetrahydrofolate--tRNA-(uracil-5-)-methyltransferase TrmFO (444 aa).

Residue Gly9–Gly14 participates in FAD binding.

Belongs to the MnmG family. TrmFO subfamily. FAD serves as cofactor.

It localises to the cytoplasm. The enzyme catalyses uridine(54) in tRNA + (6R)-5,10-methylene-5,6,7,8-tetrahydrofolate + NADH + H(+) = 5-methyluridine(54) in tRNA + (6S)-5,6,7,8-tetrahydrofolate + NAD(+). It catalyses the reaction uridine(54) in tRNA + (6R)-5,10-methylene-5,6,7,8-tetrahydrofolate + NADPH + H(+) = 5-methyluridine(54) in tRNA + (6S)-5,6,7,8-tetrahydrofolate + NADP(+). Its function is as follows. Catalyzes the folate-dependent formation of 5-methyl-uridine at position 54 (M-5-U54) in all tRNAs. In Cereibacter sphaeroides (strain ATCC 17025 / ATH 2.4.3) (Rhodobacter sphaeroides), this protein is Methylenetetrahydrofolate--tRNA-(uracil-5-)-methyltransferase TrmFO.